Reading from the N-terminus, the 102-residue chain is MYAIIKTGGKQIKVEEGQTVYIEKLAAEAGETVTFEDVLFVGGDNVKVGNPTVEGATVTAKVEKQGRAKKITVFRYKPKKNVHKKQGHRQPYTKVTIEKINA.

The protein belongs to the bacterial ribosomal protein bL21 family. As to quaternary structure, part of the 50S ribosomal subunit. Contacts protein L20.

Functionally, this protein binds to 23S rRNA in the presence of protein L20. The polypeptide is Large ribosomal subunit protein bL21 (Bacillus subtilis (strain 168)).